The sequence spans 157 residues: uncharacterized protein (157 aa).

Positions 1–19 (MRKYLIILVLLLFLSSSFG) are cleaved as a signal peptide.

This is an uncharacterized protein from Methanocaldococcus jannaschii (strain ATCC 43067 / DSM 2661 / JAL-1 / JCM 10045 / NBRC 100440) (Methanococcus jannaschii).